The following is a 120-amino-acid chain: Large ribosomal subunit protein uL18 (120 aa).

The protein belongs to the universal ribosomal protein uL18 family. Part of the 50S ribosomal subunit; part of the 5S rRNA/L5/L18/L25 subcomplex. Contacts the 5S and 23S rRNAs.

This is one of the proteins that bind and probably mediate the attachment of the 5S RNA into the large ribosomal subunit, where it forms part of the central protuberance. This chain is Large ribosomal subunit protein uL18, found in Rhizobium johnstonii (strain DSM 114642 / LMG 32736 / 3841) (Rhizobium leguminosarum bv. viciae).